We begin with the raw amino-acid sequence, 461 residues long: MLKIFNTFNRKKELFTPIHPNTVGMYVCGVTIYDLCHIGHARTFVVFDVVARYLRYLGYSLTYVRNITDIDDKIIQRASQNHQSCEALTAQMLKEMYRDFDELNLLRPDLEPRATEHITEMITLTQQLLDQKYAYVAANGDVLFSVEKNPHYGLLSRQNLEQLQAGARVEVMESKHHPMDFVLWKMSKPNEPHWPSPWGEGRPGWHIECSAMNAKALGPHFDIHGGGADLMFPHHENEMAQSICAHKAPYVNCWMHSGMIMINKEKMSKSLNNFCTIRDLLQRYDPETLRYFLLSAHYRSPLNYTEENLKQARIALTRLYTALRDTNQKAFPEGGESFEKRFVSAMNDDFNTPEAYAVLFDTAREINKLKKEHPKAADGLAAQLRKMGKVLGLLESGSLLSLLNPEKDDRHQSAEIADLIEKRNLARAHKNWEEADNARTRLFEMGVVVEDTENGTNWRRR.

Position 28 (Cys-28) interacts with Zn(2+). The 'HIGH' region motif lies at 30-40 (VTIYDLCHIGH). Zn(2+) contacts are provided by Cys-209, His-234, and Glu-238. The 'KMSKS' region signature appears at 266–270 (KMSKS). Residue Lys-269 coordinates ATP.

This sequence belongs to the class-I aminoacyl-tRNA synthetase family. In terms of assembly, monomer. It depends on Zn(2+) as a cofactor.

The protein resides in the cytoplasm. It carries out the reaction tRNA(Cys) + L-cysteine + ATP = L-cysteinyl-tRNA(Cys) + AMP + diphosphate. The polypeptide is Cysteine--tRNA ligase (Hamiltonella defensa subsp. Acyrthosiphon pisum (strain 5AT)).